A 378-amino-acid chain; its full sequence is Flap endonuclease 1 (378 aa).

An N-domain region spans residues 1–104 (MGVKDLSKVI…SELEKRTERR (104 aa)). Residue Asp34 coordinates Mg(2+). Residues Arg47 and Arg70 each contribute to the DNA site. Asp86 contacts Mg(2+). Residues 90–113 (PQMKTSELEKRTERRTEAEKQRND) are disordered. The segment covering 95–113 (SELEKRTERRTEAEKQRND) has biased composition (basic and acidic residues). Residues 122-253 (SVNKFEKRLV…KKAFELIKKY (132 aa)) are I-domain. Mg(2+)-binding residues include Glu158, Glu160, Asp179, and Asp181. Glu158 is a DNA binding site. The DNA site is built by Gly231 and Asp233. Asp233 is a Mg(2+) binding site. The segment at 336–344 (QQARIDSFF) is interaction with PCNA. Positions 348 to 378 (KVVTSETTKRKNEEKNNLKKRGPSLGKKAKK) are disordered. Basic and acidic residues predominate over residues 354–364 (TTKRKNEEKNN). The segment covering 365 to 378 (LKKRGPSLGKKAKK) has biased composition (basic residues).

It belongs to the XPG/RAD2 endonuclease family. FEN1 subfamily. Interacts with PCNA. Three molecules of FEN1 bind to one PCNA trimer with each molecule binding to one PCNA monomer. PCNA stimulates the nuclease activity without altering cleavage specificity. The cofactor is Mg(2+). In terms of processing, phosphorylated. Phosphorylation upon DNA damage induces relocalization to the nuclear plasma.

The protein localises to the nucleus. The protein resides in the nucleolus. It localises to the nucleoplasm. Its subcellular location is the mitochondrion. In terms of biological role, structure-specific nuclease with 5'-flap endonuclease and 5'-3' exonuclease activities involved in DNA replication and repair. During DNA replication, cleaves the 5'-overhanging flap structure that is generated by displacement synthesis when DNA polymerase encounters the 5'-end of a downstream Okazaki fragment. It enters the flap from the 5'-end and then tracks to cleave the flap base, leaving a nick for ligation. Also involved in the long patch base excision repair (LP-BER) pathway, by cleaving within the apurinic/apyrimidinic (AP) site-terminated flap. Acts as a genome stabilization factor that prevents flaps from equilibrating into structures that lead to duplications and deletions. Also possesses 5'-3' exonuclease activity on nicked or gapped double-stranded DNA, and exhibits RNase H activity. Also involved in replication and repair of rDNA and in repairing mitochondrial DNA. This is Flap endonuclease 1 from Brugia malayi (Filarial nematode worm).